Reading from the N-terminus, the 261-residue chain is Cathepsin G (261 aa).

Residues 1-18 (MQPLLLLLTFILLQGDEA) form the signal peptide. Residues 19-20 (GK) constitute a propeptide, activation peptide. Positions 21 to 25 (IIGGR) are important for antimicrobial activity. The region spanning 21 to 243 (IIGGREARPH…FMPWIKRTMR (223 aa)) is the Peptidase S1 domain. Residues C49 and C65 are joined by a disulfide bond. H64 functions as the Charge relay system in the catalytic mechanism. An N-linked (GlcNAc...) asparagine glycan is attached at N71. The segment at 97 to 111 (HPDYNPQNIRNDIML) is important for antimicrobial activity. Residue D108 is the Charge relay system of the active site. Disulfide bonds link C142–C207 and C172–C186. Catalysis depends on S201, which acts as the Charge relay system.

Belongs to the peptidase S1 family. In adult, detected only in bone marrow where expression is restricted to a small population of early myeloid cells.

It is found in the cell membrane. The protein resides in the cytoplasmic granule. The protein localises to the secreted. Its subcellular location is the cytoplasm. It localises to the cytosol. It is found in the lysosome. The protein resides in the nucleus. It carries out the reaction Specificity similar to chymotrypsin C.. Inhibited by chymostatin, phenylmethanesulfonyl fluoride and diisopropyl fluorophosphate. Functionally, serine protease with trypsin- and chymotrypsin-like specificity. Also displays antibacterial activity against Gram-negative and Gram-positive bacteria independent of its protease activity. Prefers Phe and Tyr residues in the P1 position of substrates but also cleaves efficiently after Trp and Leu. Shows a preference for negatively charged amino acids in the P2' position and for aliphatic amino acids both upstream and downstream of the cleavage site. Required for recruitment and activation of platelets which is mediated by the F2RL3/PAR4 platelet receptor. Binds reversibly to and stimulates B cells and CD4(+) and CD8(+) T cells. Also binds reversibly to natural killer (NK) cells and enhances NK cell cytotoxicity through its protease activity. Cleaves complement C3. Cleaves vimentin. Cleaves thrombin receptor F2R/PAR1. Cleaves the synovial mucin-type protein PRG4/lubricin. Cleaves and activates IL36G which promotes expression of chemokines CXCL1 and CXLC8 in keratinocytes. Cleaves IL33 into mature forms which have greater activity than the unprocessed form. Cleaves coagulation factor F8 to produce a partially activated form. Also cleaves and activates coagulation factor F10. Cleaves leukocyte cell surface protein SPN/CD43 to release its extracellular domain and trigger its intramembrane proteolysis by gamma-secretase, releasing the CD43 cytoplasmic tail chain (CD43-ct) which translocates to the nucleus. During apoptosis, cleaves SMARCA2/BRM to produce a 160 kDa cleavage product which localizes to the cytosol. Cleaves MBP in B cell lysosomes at '221-Phe-|-Lys-222', degrading the major immunogenic MBP epitope and preventing the activation of MBP-specific autoreactive T cells. Cleaves annexin ANXA1 and antimicrobial peptide CAMP to produce peptides which act on neutrophil N-formyl peptide receptors to enhance the release of CXCL2. Acts as a ligand for the N-formyl peptide receptor FPR1, enhancing phagocyte chemotaxis. Has antibacterial activity against the Gram-negative bacteria N.gonorrhoeae and P.aeruginosa. Likely to act against N.gonorrhoeae by interacting with N.gonorrhoeae penA/PBP2. Exhibits potent antimicrobial activity against the Gram-positive bacterium L.monocytogenes. Has antibacterial activity against the Gram-positive bacterium S.aureus and degrades S.aureus biofilms, allowing polymorphonuclear leukocytes to penetrate the biofilm and phagocytose bacteria. Has antibacterial activity against M.tuberculosis. Induces platelet aggregation which is strongly potentiated in the presence of ELANE. This is Cathepsin G (Ctsg) from Mus musculus (Mouse).